The following is a 147-amino-acid chain: Hemoglobin subunit beta-1 (147 aa).

Position 2 is an N-acetylserine (Ser2). One can recognise a Globin domain in the interval 3 to 147; that stretch reads FLSAEEKGLV…VASALAHRYH (145 aa). Lys18 carries the post-translational modification N6-succinyllysine. Residues Ser45 and Ser51 each carry the phosphoserine modification. Lys60 carries the N6-succinyllysine modification. 2 residues coordinate heme b: His64 and His93. Arg105 is subject to Asymmetric dimethylarginine.

The protein belongs to the globin family. In terms of assembly, heterotetramer of two alpha chains and two beta chains. Red blood cells.

Functionally, involved in oxygen transport from the lung to the various peripheral tissues. This Panthera onca (Jaguar) protein is Hemoglobin subunit beta-1 (HBB1).